A 200-amino-acid polypeptide reads, in one-letter code: Holliday junction resolvase RecU (200 aa).

A disordered region spans residues 1–25; it reads MTIRYPNGKRYNQASQPHKTPIKKH. Positions 85, 87, 100, and 119 each coordinate Mg(2+).

The protein belongs to the RecU family. It depends on Mg(2+) as a cofactor.

The protein resides in the cytoplasm. It catalyses the reaction Endonucleolytic cleavage at a junction such as a reciprocal single-stranded crossover between two homologous DNA duplexes (Holliday junction).. Endonuclease that resolves Holliday junction intermediates in genetic recombination. Cleaves mobile four-strand junctions by introducing symmetrical nicks in paired strands. Promotes annealing of linear ssDNA with homologous dsDNA. Required for DNA repair, homologous recombination and chromosome segregation. The sequence is that of Holliday junction resolvase RecU from Bacillus thuringiensis (strain Al Hakam).